The following is a 372-amino-acid chain: Glutamate 5-kinase (372 aa).

Residue K6 coordinates ATP. S46, D133, and N145 together coordinate substrate. ATP-binding positions include T165–D166 and T207–K213. The PUA domain maps to S272 to K350.

The protein belongs to the glutamate 5-kinase family.

It is found in the cytoplasm. It catalyses the reaction L-glutamate + ATP = L-glutamyl 5-phosphate + ADP. The protein operates within amino-acid biosynthesis; L-proline biosynthesis; L-glutamate 5-semialdehyde from L-glutamate: step 1/2. Its function is as follows. Catalyzes the transfer of a phosphate group to glutamate to form L-glutamate 5-phosphate. The sequence is that of Glutamate 5-kinase from Thermoanaerobacter pseudethanolicus (strain ATCC 33223 / 39E) (Clostridium thermohydrosulfuricum).